The following is a 620-amino-acid chain: Arginine--tRNA ligase (620 aa).

The 'HIGH' region motif lies at 147-157; it reads ANPTGPIHIGG.

The protein belongs to the class-I aminoacyl-tRNA synthetase family. As to quaternary structure, monomer.

Its subcellular location is the cytoplasm. The enzyme catalyses tRNA(Arg) + L-arginine + ATP = L-arginyl-tRNA(Arg) + AMP + diphosphate. The polypeptide is Arginine--tRNA ligase (Bifidobacterium longum subsp. infantis (strain ATCC 15697 / DSM 20088 / JCM 1222 / NCTC 11817 / S12)).